The sequence spans 1136 residues: Unconventional myosin-Ib (1136 aa).

Residues 15 to 701 enclose the Myosin motor domain; sequence IGVGDMVLLE…TLFKLEDLRK (687 aa). A Phosphoserine modification is found at serine 60. Position 108 to 115 (108 to 115) interacts with ATP; the sequence is GESGAGKT. A Glycyl lysine isopeptide (Lys-Gly) (interchain with G-Cter in SUMO1); alternate cross-link involves residue lysine 287. A Glycyl lysine isopeptide (Lys-Gly) (interchain with G-Cter in SUMO2); alternate cross-link involves residue lysine 287. The segment at 578-600 is actin-binding; sequence VATLMKNLQTKNPNYIRCIKPND. IQ domains are found at residues 704 to 733, 728 to 748, 750 to 779, 779 to 808, 808 to 837, and 837 to 866; these read LEDLATLIQKIYRGWKCRTHFLLMKKSQIV, KKSQIVIAAWYRRYAQQKRYQ, TKSSALVIQSYIRGWKARKILRELKHQKRC, CKEAVTTIAAYWHGTQARRELRRLKEEARN, NKHAIAVIWAYWLGSKARRELKRLKEEARR, and RKHAVAVIWAYWLGLKVRREYRKFFRANAG. The TH1 domain occupies 952 to 1136; the sequence is KALYPSSVGQ…NNRLLEVAVP (185 aa).

This sequence belongs to the TRAFAC class myosin-kinesin ATPase superfamily. Myosin family.

Functionally, motor protein that may participate in process critical to neuronal development and function such as cell migration, neurite outgrowth and vesicular transport. The chain is Unconventional myosin-Ib (MYO1B) from Homo sapiens (Human).